The sequence spans 124 residues: MTQDARARGQNAHFAGAAAEEIAIRAYLARGLTLVKSRWRGPHGEIDLILRDGETVIFAEVKSSTTRDKAAARIKPAQMQRVFNSAGAFLEGEPLGQLTPARLDVVLVWGAGEVEIIENAYGHG.

This sequence belongs to the UPF0102 family.

In Ruegeria sp. (strain TM1040) (Silicibacter sp.), this protein is UPF0102 protein TM1040_0449.